The following is a 152-amino-acid chain: Deoxyuridine 5'-triphosphate nucleotidohydrolase (152 aa).

Substrate is bound by residues 71–73 (RSG), asparagine 84, 88–90 (LID), and methionine 98.

It belongs to the dUTPase family. Requires Mg(2+) as cofactor.

It carries out the reaction dUTP + H2O = dUMP + diphosphate + H(+). Its pathway is pyrimidine metabolism; dUMP biosynthesis; dUMP from dCTP (dUTP route): step 2/2. This enzyme is involved in nucleotide metabolism: it produces dUMP, the immediate precursor of thymidine nucleotides and it decreases the intracellular concentration of dUTP so that uracil cannot be incorporated into DNA. The protein is Deoxyuridine 5'-triphosphate nucleotidohydrolase of Shewanella putrefaciens (strain CN-32 / ATCC BAA-453).